A 209-amino-acid chain; its full sequence is Small ribosomal subunit protein uS4 (209 aa).

Residues 98–164 (RRLDNVVYRL…LPVKNAIELN (67 aa)) form the S4 RNA-binding domain.

It belongs to the universal ribosomal protein uS4 family. Part of the 30S ribosomal subunit. Contacts protein S5. The interaction surface between S4 and S5 is involved in control of translational fidelity.

Functionally, one of the primary rRNA binding proteins, it binds directly to 16S rRNA where it nucleates assembly of the body of the 30S subunit. Its function is as follows. With S5 and S12 plays an important role in translational accuracy. This is Small ribosomal subunit protein uS4 from Thermosipho africanus (strain TCF52B).